The following is a 399-amino-acid chain: Tyrosine--tRNA ligase (399 aa).

The short motif at 42–51 (PTAPDLHLGH) is the 'HIGH' region element. The short motif at 226–230 (KMSKS) is the 'KMSKS' region element. Lys229 lines the ATP pocket. An S4 RNA-binding domain is found at 337–398 (IAIANLLKDA…GKRKFARITV (62 aa)).

Belongs to the class-I aminoacyl-tRNA synthetase family. TyrS type 2 subfamily. As to quaternary structure, homodimer.

It localises to the cytoplasm. It carries out the reaction tRNA(Tyr) + L-tyrosine + ATP = L-tyrosyl-tRNA(Tyr) + AMP + diphosphate + H(+). Catalyzes the attachment of tyrosine to tRNA(Tyr) in a two-step reaction: tyrosine is first activated by ATP to form Tyr-AMP and then transferred to the acceptor end of tRNA(Tyr). This is Tyrosine--tRNA ligase from Colwellia psychrerythraea (strain 34H / ATCC BAA-681) (Vibrio psychroerythus).